The chain runs to 389 residues: Ankyrin repeat domain-containing protein 42 (389 aa).

Residues 1 to 21 (MPGVANSGPSTSSRETANPCS) form a disordered region. A compositionally biased stretch (polar residues) spans 7-19 (SGPSTSSRETANP). 9 ANK repeats span residues 25–60 (VHFG…DITH), 64–93 (RGWT…NLTA), 97–126 (RGCT…DPSV), 130–159 (REWR…SIED), 163–192 (NGNL…SATQ), 200–232 (NGEN…DLED), 235–265 (TLAF…NINE), 269–298 (NGST…DSNI), and 302–332 (AGER…DIDD).

The chain is Ankyrin repeat domain-containing protein 42 (ANKRD42) from Homo sapiens (Human).